Reading from the N-terminus, the 55-residue chain is Large ribosomal subunit protein bL33 (55 aa).

The protein belongs to the bacterial ribosomal protein bL33 family.

In Acidothermus cellulolyticus (strain ATCC 43068 / DSM 8971 / 11B), this protein is Large ribosomal subunit protein bL33.